The primary structure comprises 454 residues: 3-phosphoshikimate 1-carboxyvinyltransferase (454 aa).

Positions 1–31 (MSENHSEGASRPVISRRPAAGLRADHPVHVP) are disordered. 3 residues coordinate 3-phosphoshikimate: K34, S35, and R39. A phosphoenolpyruvate-binding site is contributed by K34. Positions 107 and 135 each coordinate phosphoenolpyruvate. 3-phosphoshikimate is bound by residues S180, Q182, D334, and K361. Q182 serves as a coordination point for phosphoenolpyruvate. The active-site Proton acceptor is D334. Residues R365 and R409 each coordinate phosphoenolpyruvate.

This sequence belongs to the EPSP synthase family. Monomer.

It localises to the cytoplasm. The enzyme catalyses 3-phosphoshikimate + phosphoenolpyruvate = 5-O-(1-carboxyvinyl)-3-phosphoshikimate + phosphate. It participates in metabolic intermediate biosynthesis; chorismate biosynthesis; chorismate from D-erythrose 4-phosphate and phosphoenolpyruvate: step 6/7. Catalyzes the transfer of the enolpyruvyl moiety of phosphoenolpyruvate (PEP) to the 5-hydroxyl of shikimate-3-phosphate (S3P) to produce enolpyruvyl shikimate-3-phosphate and inorganic phosphate. This Granulibacter bethesdensis (strain ATCC BAA-1260 / CGDNIH1) protein is 3-phosphoshikimate 1-carboxyvinyltransferase.